Here is a 579-residue protein sequence, read N- to C-terminus: MAGPDSPQQQQVEEKAEQIDDAELAFQGINMLLNNGFRESDELFRRYRTHSPLMSFGASFVSFLNAMMTFEEEKMQMASDDLRTTEKLCESDNAGVIETIRNKIKKSMDSGRSGVEIVDRLQRQIIVADCQVYLAVLSFVKQELSAYIKGGWILRKAWKMYNKCYSDISQLQEACRRRSSDQQGALASDQANHNTSTGSGGRVTDEVLDRLKGSVSFGYGLFHLCISMVPPHLLKIVNLLGFPGDRHQGLASLAYASESKDMKAPLATLALLWYHTVVQPFFALDGSDSRAGLLEAKAILQKKAMVYPNSSLFIFFKGRVQRLECQINSALASFQDALEFASDQREIQHVCLYEIGWCSMIEMSFEDAFRSFERLKNESRWSQCYYAYLTGVCQGASGDLEGAKGVFRDVQKLFKRKNNQIEQFALKRAEKLRKVSLTRELCILGVVEVLYLWKALPNCSSSKLQLMNQVLQGLDDQSSIGLKHLLLGAIQKCLGNIKDALQSFQLAAQDEYGRLNNSYVQPYACYELGCVLLAKPETLSKGRSLLLQAKENYAGYDFENRLHVRIHSALASIKEVVPH.

A compositionally biased stretch (polar residues) spans 182–197 (QQGALASDQANHNTST). The disordered stretch occupies residues 182–202 (QQGALASDQANHNTSTGSGGR). TPR repeat units lie at residues 311-344 (SLFI…ASDQ), 349-382 (HVCL…SRWS), and 481-514 (GLKH…EYGR).

It belongs to the TTC39 family.

The sequence is that of Tetratricopeptide repeat protein 39C (ttc39c) from Danio rerio (Zebrafish).